A 312-amino-acid polypeptide reads, in one-letter code: Olfactory receptor 4F6 (312 aa).

The Extracellular segment spans residues 1 to 25 (MDEANHSVVSEFVFLGLSDSRKIQL). N-linked (GlcNAc...) asparagine glycosylation is present at Asn5. A helical transmembrane segment spans residues 26–49 (LLFLFFSVFYVSSLMGNLLIVLTV). The Cytoplasmic portion of the chain corresponds to 50–57 (TSDPRLQS). Residues 58–79 (PMYFLLANLSIINLVFCSSTAP) form a helical membrane-spanning segment. The Extracellular segment spans residues 80–100 (KMIYDLFRKHKTISFGGCVVQ). Cys97 and Cys189 are disulfide-bonded. Residues 101–120 (IFFIHAVGGTEMVLLIAMAF) form a helical membrane-spanning segment. Over 121 to 139 (DRYVAICKPLHYLTIMNPQ) the chain is Cytoplasmic. Residues 140–158 (RCILFLVISWIIGIIHSVI) form a helical membrane-spanning segment. Residues 159–195 (QLAFVVDLLFCGPNELDSFFCDLPRFIKLACIETYTL) are Extracellular-facing. A helical transmembrane segment spans residues 196–219 (GFMVTANSGFISLASFLILIISYI). The Cytoplasmic segment spans residues 220–235 (FILVTVQKKSSGGIFK). Residues 236–258 (AFSMLSAHVIVVVLVFGPLIFFY) form a helical membrane-spanning segment. At 259–269 (IFPFPTSHLDK) the chain is on the extracellular side. The helical transmembrane segment at 270–289 (FLAIFDAVITPVLNPVIYTF) threads the bilayer. The Cytoplasmic portion of the chain corresponds to 290 to 312 (RNKEMMVAMRRRCSQFVNYSKIF).

It belongs to the G-protein coupled receptor 1 family.

The protein resides in the cell membrane. Functionally, odorant receptor. In Homo sapiens (Human), this protein is Olfactory receptor 4F6 (OR4F6).